We begin with the raw amino-acid sequence, 1396 residues long: DNA-directed RNA polymerase subunit beta' (1396 aa).

Residues Cys70, Cys72, Cys85, and Cys88 each contribute to the Zn(2+) site. Residues Asp460, Asp462, and Asp464 each coordinate Mg(2+). 4 residues coordinate Zn(2+): Cys807, Cys881, Cys888, and Cys891. The segment covering 1361–1378 (EPEEIEEPVPEDLEDETA) has biased composition (acidic residues). A disordered region spans residues 1361–1396 (EPEEIEEPVPEDLEDETAGADSAQAASEESVAEGKD). Residues 1379–1389 (GADSAQAASEE) show a composition bias toward low complexity.

This sequence belongs to the RNA polymerase beta' chain family. The RNAP catalytic core consists of 2 alpha, 1 beta, 1 beta' and 1 omega subunit. When a sigma factor is associated with the core the holoenzyme is formed, which can initiate transcription. Mg(2+) is required as a cofactor. Requires Zn(2+) as cofactor.

It catalyses the reaction RNA(n) + a ribonucleoside 5'-triphosphate = RNA(n+1) + diphosphate. Its function is as follows. DNA-dependent RNA polymerase catalyzes the transcription of DNA into RNA using the four ribonucleoside triphosphates as substrates. The sequence is that of DNA-directed RNA polymerase subunit beta' from Syntrophotalea carbinolica (strain DSM 2380 / NBRC 103641 / GraBd1) (Pelobacter carbinolicus).